We begin with the raw amino-acid sequence, 87 residues long: Insulin-related peptide 1 (87 aa).

The N-terminal stretch at 1–19 (MKSFMVFVLIFACFSCYYA) is a signal peptide. The propeptide occupies 20 to 44 (QESTNFYCGRTLSRALAVLCYGAES). R64 carries the post-translational modification Arginine amide. A propeptide spanning residues 68-87 (GPVDECCEKACSIQELMTYC) is cleaved from the precursor.

This sequence belongs to the insulin family. In terms of tissue distribution, DAGWWIPQHGHHALAGVR-amide: Expressed in corpora cardiaca (CC), corpora allata (CA), antennal lobe (AL) and gnathal ganglion (GNG) (at protein level). Expression in CC and CA detected in most animals, in AL and GNG in few animals (at protein level).

The protein localises to the secreted. The sequence is that of Insulin-related peptide 1 from Agrotis ipsilon (Black cutworm moth).